A 380-amino-acid chain; its full sequence is Protein COS12 (380 aa).

Topologically, residues 1 to 70 are cytoplasmic; that stretch reads MDGAKFENTV…WKIRGKRHYL (70 aa). A helical membrane pass occupies residues 71–91; that stretch reads VIVTALMFEVLYFLWTYSYIF. Residues 92–231 lie on the Extracellular side of the membrane; sequence RERTLGKQVS…KLLWAFKEVT (140 aa). A helical membrane pass occupies residues 232 to 252; the sequence is IMNSRFAFFSIAYLNGLLTIP. Residues 253–257 lie on the Cytoplasmic side of the membrane; sequence RLRNS. A helical membrane pass occupies residues 258–278; that stretch reads LHILYVCAVLSSMIIEYLIGI. At 279-380 the chain is on the extracellular side; that stretch reads DKFRFKSMNL…KEAQSACNDV (102 aa).

The protein belongs to the DUP/COS family.

The protein localises to the membrane. The sequence is that of Protein COS12 (COS12) from Saccharomyces cerevisiae (strain ATCC 204508 / S288c) (Baker's yeast).